The following is a 278-amino-acid chain: tRNA (guanine-N(7)-)-methyltransferase (278 aa).

Residues Gly63, 86 to 87, 119 to 120, and Leu139 each bind S-adenosyl-L-methionine; these read EL and NA. Residue Asp142 is part of the active site. S-adenosyl-L-methionine is bound at residue 217–219; the sequence is TEE. Residues 259 to 278 are disordered; it reads IDSTTTTTTSTATITEVESK. Low complexity predominate over residues 261-278; the sequence is STTTTTTSTATITEVESK.

This sequence belongs to the class I-like SAM-binding methyltransferase superfamily. TrmB family.

The protein localises to the nucleus. The enzyme catalyses guanosine(46) in tRNA + S-adenosyl-L-methionine = N(7)-methylguanosine(46) in tRNA + S-adenosyl-L-homocysteine. It functions in the pathway tRNA modification; N(7)-methylguanine-tRNA biosynthesis. In terms of biological role, catalyzes the formation of N(7)-methylguanine at position 46 (m7G46) in tRNA. In Dictyostelium discoideum (Social amoeba), this protein is tRNA (guanine-N(7)-)-methyltransferase (mettl1).